A 114-amino-acid chain; its full sequence is Cuticle protein AMP5 (114 aa).

Pyrrolidone carboxylic acid is present on Gln-1. A Chitin-binding type R&amp;R domain is found at Ala-18–Pro-83.

As to expression, arthrodial membrane.

This chain is Cuticle protein AMP5, found in Homarus americanus (American lobster).